The primary structure comprises 534 residues: Tyrosine-protein kinase Fyn (534 aa).

Glycine 2 is lipidated: N-myristoyl glycine. S-palmitoyl cysteine attachment occurs at residues cysteine 3 and cysteine 6. Threonine 12 is modified (phosphothreonine; by PKC). The interval 15–39 is disordered; sequence TDERDGSLTQSSGYRYGTDPTPQHY. Positions 82 to 143 constitute an SH3 domain; that stretch reads TGVTLFEALY…PSNYVAPVDS (62 aa). Residues 149-246 enclose the SH2 domain; it reads WYFGKLGRKD…GLCFNLTVIA (98 aa). Residues 268-521 enclose the Protein kinase domain; the sequence is LFLEQKLGQG…YLQGFLEDYF (254 aa). Residues 274–282 and lysine 296 each bind ATP; that span reads LGQGCFAEV. The active-site Proton acceptor is aspartate 387. Tyrosine 417 is modified (phosphotyrosine; by autocatalysis). The residue at position 528 (tyrosine 528) is a Phosphotyrosine.

It belongs to the protein kinase superfamily. Tyr protein kinase family. SRC subfamily. Associates through its SH3 domain, to the p85 subunit of phosphatidylinositol 3-kinase. Requires Mn(2+) as cofactor. Thymus and spleen.

It is found in the cytoplasm. The protein localises to the nucleus. Its subcellular location is the cell membrane. The protein resides in the perikaryon. It catalyses the reaction L-tyrosyl-[protein] + ATP = O-phospho-L-tyrosyl-[protein] + ADP + H(+). With respect to regulation, inhibited by phosphorylation of Tyr-528 by leukocyte common antigen and activated by dephosphorylation of this site. In terms of biological role, tyrosine-protein kinase implicated in the control of cell growth. Plays a role in the regulation of intracellular calcium levels. Required in brain development and mature brain function with important roles in the regulation of axon growth, axon guidance, and neurite extension. Role in CNTN1-mediated signaling. The chain is Tyrosine-protein kinase Fyn (FYN) from Gallus gallus (Chicken).